We begin with the raw amino-acid sequence, 330 residues long: Ribose operon repressor (330 aa).

The HTH lacI-type domain maps to 2–56 (ATMKDVARLAGVSTSTVSHVINKDRFVSEAITAKVEAAIKELNYAPSALARSLKL). The segment at residues 4–23 (MKDVARLAGVSTSTVSHVIN) is a DNA-binding region (H-T-H motif).

In terms of biological role, transcriptional repressor for the ribose rbsDACBK operon. RbsR binds to a region of perfect dyad symmetry spanning the rbs operon transcriptional start site. The affinity for the rbs operator is reduced by addition of ribose, consistent with ribose being the inducer of the operon. This is Ribose operon repressor (rbsR) from Escherichia coli O6:H1 (strain CFT073 / ATCC 700928 / UPEC).